The primary structure comprises 366 residues: Glycine betaine monooxygenase reductase subunit (366 aa).

The region spanning 16-119 (NGRHLVRCVK…HGPVGLFNAI (104 aa)) is the FAD-binding FR-type domain. Residues 282–366 (HQVEFTATGK…VPKGDVVIDY (85 aa)) enclose the 2Fe-2S ferredoxin-type domain. [2Fe-2S] cluster is bound by residues Cys-316, Cys-321, Cys-324, and Cys-354.

The protein in the N-terminal section; belongs to the FAD-binding oxidoreductase type 6 family. In terms of assembly, the system is composed of an oxygenase subunit (GbcA) and a reductase subunit (GbcB). FAD serves as cofactor. [2Fe-2S] cluster is required as a cofactor.

It carries out the reaction glycine betaine + NADH + O2 + H(+) = N,N-dimethylglycine + formaldehyde + NAD(+) + H2O. Functionally, involved in degradation of glycine betaine. Part of a Rieske-type oxygenase system that catalyzes the conversion of glycine betaine (GB) to dimethylglycine (DMG). This subunit is the ferredoxin reductase component of the system. Required for growth on choline and GB, but not for growth on DMG. In Pseudomonas aeruginosa (strain ATCC 15692 / DSM 22644 / CIP 104116 / JCM 14847 / LMG 12228 / 1C / PRS 101 / PAO1), this protein is Glycine betaine monooxygenase reductase subunit.